We begin with the raw amino-acid sequence, 285 residues long: Steroidogenic acute regulatory protein, mitochondrial (285 aa).

The N-terminal 63 residues, methionine 1–leucine 63, are a transit peptide targeting the mitochondrion. Phosphoserine; by PKA is present on residues serine 57 and serine 195. In terms of domain architecture, START spans leucine 67–alanine 280.

May interact with TSPO.

The protein resides in the mitochondrion. The enzyme catalyses cholesterol(in) = cholesterol(out). It participates in steroid metabolism; cholesterol metabolism. Its function is as follows. Plays a key role in steroid hormone synthesis by enhancing the metabolism of cholesterol into pregnenolone. Mediates the transfer of cholesterol from the outer mitochondrial membrane to the inner mitochondrial membrane where it is cleaved to pregnenolone. This chain is Steroidogenic acute regulatory protein, mitochondrial (STAR), found in Equus caballus (Horse).